Reading from the N-terminus, the 244-residue chain is tRNA pseudouridine synthase A (244 aa).

The active-site Nucleophile is aspartate 52. Tyrosine 110 lines the substrate pocket.

It belongs to the tRNA pseudouridine synthase TruA family. As to quaternary structure, homodimer.

The catalysed reaction is uridine(38/39/40) in tRNA = pseudouridine(38/39/40) in tRNA. Functionally, formation of pseudouridine at positions 38, 39 and 40 in the anticodon stem and loop of transfer RNAs. The protein is tRNA pseudouridine synthase A of Finegoldia magna (strain ATCC 29328 / DSM 20472 / WAL 2508) (Peptostreptococcus magnus).